The sequence spans 208 residues: Large ribosomal subunit protein bL25 (208 aa).

The protein belongs to the bacterial ribosomal protein bL25 family. CTC subfamily. As to quaternary structure, part of the 50S ribosomal subunit; part of the 5S rRNA/L5/L18/L25 subcomplex. Contacts the 5S rRNA. Binds to the 5S rRNA independently of L5 and L18.

Its function is as follows. This is one of the proteins that binds to the 5S RNA in the ribosome where it forms part of the central protuberance. The chain is Large ribosomal subunit protein bL25 from Burkholderia pseudomallei (strain K96243).